The sequence spans 178 residues: Oligoribonuclease (178 aa).

In terms of domain architecture, Exonuclease spans 7–168 (LIWIDLEMTG…DDIRESIAEL (162 aa)). Residue tyrosine 128 is part of the active site.

Belongs to the oligoribonuclease family.

The protein resides in the cytoplasm. 3'-to-5' exoribonuclease specific for small oligoribonucleotides. This is Oligoribonuclease from Francisella tularensis subsp. tularensis (strain FSC 198).